The sequence spans 72 residues: DNA-directed RNA polymerase subunit Rpo10 (72 aa).

Cysteine 7, cysteine 10, cysteine 53, and cysteine 54 together coordinate Zn(2+).

Belongs to the archaeal Rpo10/eukaryotic RPB10 RNA polymerase subunit family. As to quaternary structure, part of the RNA polymerase complex. Requires Zn(2+) as cofactor.

The protein resides in the cytoplasm. It carries out the reaction RNA(n) + a ribonucleoside 5'-triphosphate = RNA(n+1) + diphosphate. DNA-dependent RNA polymerase (RNAP) catalyzes the transcription of DNA into RNA using the four ribonucleoside triphosphates as substrates. The polypeptide is DNA-directed RNA polymerase subunit Rpo10 (Thermoplasma acidophilum (strain ATCC 25905 / DSM 1728 / JCM 9062 / NBRC 15155 / AMRC-C165)).